Reading from the N-terminus, the 338-residue chain is MKNVGFIVTKSEIGGAQTWVNEISNLIKEECNIFLITSEEGWLTHKDVFAGVFVIPGIKKYFDFLTLFKLRKILKENNISTLIASSANAGVYARLVRLLVDFKCIYVSHGWSCLYNGGRLKSIFCIVEKYLSLLTDVIWCVSKSDEKKAIENIGIKEPKIITVSNSVPQMPRCNNKQLQYKVLFVGRLTHPKRPELLANVISKKPQYSLHIVGGGERLESLKKQFSECENIHFLGEVNNFYNYHEYDLFSLISDSEGLPMSGLEAHTAAIPLLLSDVGGCFELIEGNGLLVENTEDDIGYKLDKIFDDYENYREQAIRASGKFVIENYASAYKSIILG.

It belongs to the glycosyltransferase group 1 family. Glycosyltransferase 4 subfamily.

It catalyses the reaction N-acetyl-alpha-D-galactosaminyl-di-trans,octa-cis-undecaprenyl diphosphate + UDP-N-acetyl-alpha-D-galactosamine = alpha-D-GalNAc-(1-&gt;3)-alpha-D-GalNAc-di-trans,octa-cis-undecaprenyl diphosphate + UDP + H(+). It participates in bacterial outer membrane biogenesis; LPS O-antigen biosynthesis. Its function is as follows. Involved in the assembly of the O-repeating unit during O-antigen biosynthesis. The polypeptide is Probable O-antigen biosynthesis glycosyltransferase WbiN (Escherichia coli).